We begin with the raw amino-acid sequence, 172 residues long: Light-harvesting complex-like protein OHP2, chloroplastic (172 aa).

The N-terminal 43 residues, 1–43 (MSVASPIQCIRILNPSSSSSSSTASSSFRFSTTTKPCVFIIRC), are a transit peptide targeting the chloroplast. Topologically, residues 44-135 (SQTEGPLRRP…QPKNEISNGR (92 aa)) are stromal. A disordered region spans residues 45-90 (QTEGPLRRPSAPPTLREPQKPVPPSQPSSSPPPSPPPQKAVAVDGK). Positions 64 to 82 (KPVPPSQPSSSPPPSPPPQ) are enriched in pro residues. The chain crosses the membrane as a helical span at residues 136-156 (WAMFGFAVGMLTEYATGSDLV). Over 157-172 (DQVKILLSNFGILDLE) the chain is Lumenal.

This sequence belongs to the ELIP/psbS family. Component of a high molecular weight complex containing OHP1, OHP2 and HCF244, and PSII core proteins D1/D2, HCF136 and HCF173. Forms a trimeric complex with OHP1 and HCF244 that mutually stabilizes each subunit.

The protein resides in the plastid. It is found in the chloroplast thylakoid membrane. Its function is as follows. May play a photoprotective role within PSI in response to light stress. Forms a trimeric complex with OHP1 and HCF244 that is required to promote PSII core subunit assembly. The trimeric complex forms a transient PSII reaction center-like complex with PsbA, PsbD, PsbE, PsbF and PsbI subunits in thylakoids for early assembly of PSII as well as PSII repair. The trimeric complex is required for the recruitment of ribosomes to the psbA mRNA during PSII biogenesis and repair. Forms a heterodimer with OHP1 that binds chlorophylls and carotenoids, and that may function in the delivery of pigments to the PsbA subunit of PSII. This Arabidopsis thaliana (Mouse-ear cress) protein is Light-harvesting complex-like protein OHP2, chloroplastic.